The chain runs to 126 residues: MSAPNPKAFPLADATLSQQILDVVQQASNMRQLKKGANEATKTLNRGISEFIIMAADCEPIEILLHLPLLCEDKNVPYVFVPSRTALGRACGVSRPVIAASITTNDASAIKSQIYAVKDKIETLLI.

This sequence belongs to the eukaryotic ribosomal protein eL8 family. As to quaternary structure, component of the U3 snoRNP particle. Binds to the C'/D and B/C motifs in U3 snoRNA. Component of the 25S U4/U6.U5 tri-snRNP particle, a subcomplex of the spliceosome. Binds to the 5' stem-loop of U4 snRNA.

It localises to the nucleus. It is found in the nucleolus. Its function is as follows. Common component of the spliceosome and rRNA processing machinery. In association with the spliceosomal U4/U6.U5 tri-snRNP particle, required for splicing of pre-mRNA. In association with box C/D snoRNPs, required for processing of pre-ribosomal RNA (rRNA) and site-specific 2'-O-methylation of substrate RNAs. Essential for the accumulation and stability of U4 snRNA, U6 snRNA, and box C/D snoRNAs. The polypeptide is 13 kDa ribonucleoprotein-associated protein (SNU13) (Kluyveromyces lactis (strain ATCC 8585 / CBS 2359 / DSM 70799 / NBRC 1267 / NRRL Y-1140 / WM37) (Yeast)).